A 246-amino-acid polypeptide reads, in one-letter code: Small ribosomal subunit protein uS3 (246 aa).

The KH type-2 domain maps to 23-94; sequence LNEFLTRELA…RIELYAEKVA (72 aa). The disordered stretch occupies residues 201–246; sequence GPKKPLPDNVSVVEPKEEKIYETPETEYKIPPPSKPLDDLSEAKVL. 2 stretches are compositionally biased toward basic and acidic residues: residues 214 to 228 and 236 to 246; these read EPKEEKIYETPETEY and PLDDLSEAKVL. Phosphothreonine occurs at positions 223 and 226. S241 is modified (phosphoserine).

The protein belongs to the universal ribosomal protein uS3 family. Interacts with LTV1; the interaction is RNA-independent.

It localises to the cytoplasm. It is found in the nucleus. Functionally, has DNA repair activity directed towards the mutagenic lesions 8-oxoguanine and abasic sites in DNA. It can cleave DNA containing 8-oxoguanine residues efficiently. Also acts as an ap lyase, cleaving phosphodiester bonds via a beta,delta elimination reaction. This Drosophila melanogaster (Fruit fly) protein is Small ribosomal subunit protein uS3 (RpS3).